We begin with the raw amino-acid sequence, 257 residues long: 3-methyl-2-oxobutanoate hydroxymethyltransferase (257 aa).

2 residues coordinate Mg(2+): Asp42 and Asp86. 3-methyl-2-oxobutanoate is bound by residues 42-43 (DS), Asp86, and Lys116. Glu118 lines the Mg(2+) pocket. Catalysis depends on Glu185, which acts as the Proton acceptor.

This sequence belongs to the PanB family. Homodecamer; pentamer of dimers. The cofactor is Mg(2+).

It localises to the cytoplasm. The enzyme catalyses 3-methyl-2-oxobutanoate + (6R)-5,10-methylene-5,6,7,8-tetrahydrofolate + H2O = 2-dehydropantoate + (6S)-5,6,7,8-tetrahydrofolate. Its pathway is cofactor biosynthesis; (R)-pantothenate biosynthesis; (R)-pantoate from 3-methyl-2-oxobutanoate: step 1/2. Its function is as follows. Catalyzes the reversible reaction in which hydroxymethyl group from 5,10-methylenetetrahydrofolate is transferred onto alpha-ketoisovalerate to form ketopantoate. The sequence is that of 3-methyl-2-oxobutanoate hydroxymethyltransferase from Prochlorococcus marinus (strain MIT 9301).